Reading from the N-terminus, the 144-residue chain is MNPSRCRILAVGKVRRSWIQDGIELYRKRLPGLEIIEIRDSTPDKEADSIRASLRPNEHVIALMEEGDAVGSIPFARRLDQLGNQRLAFVIGGADGLTNELKGRAHWQLSLSPMTFPHELARLMLIEQLFRAQAILQGSPYHRA.

Residues L63, G92, and 111-116 (LSPMTF) each bind S-adenosyl-L-methionine.

The protein belongs to the RNA methyltransferase RlmH family. Homodimer.

Its subcellular location is the cytoplasm. It catalyses the reaction pseudouridine(1915) in 23S rRNA + S-adenosyl-L-methionine = N(3)-methylpseudouridine(1915) in 23S rRNA + S-adenosyl-L-homocysteine + H(+). Functionally, specifically methylates the pseudouridine at position 1915 (m3Psi1915) in 23S rRNA. This is Ribosomal RNA large subunit methyltransferase H from Parasynechococcus marenigrum (strain WH8102).